We begin with the raw amino-acid sequence, 265 residues long: Indole-3-glycerol phosphate synthase (265 aa).

It belongs to the TrpC family.

It carries out the reaction 1-(2-carboxyphenylamino)-1-deoxy-D-ribulose 5-phosphate + H(+) = (1S,2R)-1-C-(indol-3-yl)glycerol 3-phosphate + CO2 + H2O. The protein operates within amino-acid biosynthesis; L-tryptophan biosynthesis; L-tryptophan from chorismate: step 4/5. The polypeptide is Indole-3-glycerol phosphate synthase (Xanthomonas euvesicatoria pv. vesicatoria (strain 85-10) (Xanthomonas campestris pv. vesicatoria)).